Here is a 333-residue protein sequence, read N- to C-terminus: Phosphoribosylformylglycinamidine cyclo-ligase (333 aa).

Belongs to the AIR synthase family.

It is found in the cytoplasm. It carries out the reaction 2-formamido-N(1)-(5-O-phospho-beta-D-ribosyl)acetamidine + ATP = 5-amino-1-(5-phospho-beta-D-ribosyl)imidazole + ADP + phosphate + H(+). It functions in the pathway purine metabolism; IMP biosynthesis via de novo pathway; 5-amino-1-(5-phospho-D-ribosyl)imidazole from N(2)-formyl-N(1)-(5-phospho-D-ribosyl)glycinamide: step 2/2. The sequence is that of Phosphoribosylformylglycinamidine cyclo-ligase from Methanosarcina barkeri (strain Fusaro / DSM 804).